The following is a 76-amino-acid chain: Large ribosomal subunit protein uL24 (76 aa).

The protein belongs to the universal ribosomal protein uL24 family. As to quaternary structure, part of the 50S ribosomal subunit.

Its function is as follows. One of two assembly initiator proteins, it binds directly to the 5'-end of the 23S rRNA, where it nucleates assembly of the 50S subunit. Functionally, one of the proteins that surrounds the polypeptide exit tunnel on the outside of the subunit. The sequence is that of Large ribosomal subunit protein uL24 from Campylobacter hominis (strain ATCC BAA-381 / DSM 21671 / CCUG 45161 / LMG 19568 / NCTC 13146 / CH001A).